The chain runs to 449 residues: tRNA-2-methylthio-N(6)-dimethylallyladenosine synthase (449 aa).

In terms of domain architecture, MTTase N-terminal spans arginine 13 to lysine 128. Cysteine 22, cysteine 58, cysteine 92, cysteine 166, cysteine 170, and cysteine 173 together coordinate [4Fe-4S] cluster. The 232-residue stretch at serine 152–methionine 383 folds into the Radical SAM core domain. The 64-residue stretch at lysine 386–leucine 449 folds into the TRAM domain.

This sequence belongs to the methylthiotransferase family. MiaB subfamily. Monomer. Requires [4Fe-4S] cluster as cofactor.

The protein resides in the cytoplasm. It catalyses the reaction N(6)-dimethylallyladenosine(37) in tRNA + (sulfur carrier)-SH + AH2 + 2 S-adenosyl-L-methionine = 2-methylsulfanyl-N(6)-dimethylallyladenosine(37) in tRNA + (sulfur carrier)-H + 5'-deoxyadenosine + L-methionine + A + S-adenosyl-L-homocysteine + 2 H(+). Functionally, catalyzes the methylthiolation of N6-(dimethylallyl)adenosine (i(6)A), leading to the formation of 2-methylthio-N6-(dimethylallyl)adenosine (ms(2)i(6)A) at position 37 in tRNAs that read codons beginning with uridine. This is tRNA-2-methylthio-N(6)-dimethylallyladenosine synthase from Azobacteroides pseudotrichonymphae genomovar. CFP2.